The following is a 215-amino-acid chain: MSKAIVLDSHLKEKGSMELPKRYEGINSHNLYLYVKHYLSSARANTAKSKNRAEVSGGGRKPWAQKGGGRARAGSITSPVFVGGGVSHGATNKRNYNLKINKKQKRLALEYALEEKAQANKLFVVEKIAIKGVVEDNKRKHLTKEANQMFQALEQRDTLFVCMNMDEYTELAFSNLKKCLIIDVNELNAYLLAAFSSVVMEEAAFQHIVQDKTEE.

The tract at residues 46–72 is disordered; the sequence is TAKSKNRAEVSGGGRKPWAQKGGGRAR. Over residues 56–71 the composition is skewed to gly residues; the sequence is SGGGRKPWAQKGGGRA.

It belongs to the universal ribosomal protein uL4 family. In terms of assembly, part of the 50S ribosomal subunit.

Functionally, one of the primary rRNA binding proteins, this protein initially binds near the 5'-end of the 23S rRNA. It is important during the early stages of 50S assembly. It makes multiple contacts with different domains of the 23S rRNA in the assembled 50S subunit and ribosome. Its function is as follows. Forms part of the polypeptide exit tunnel. This Helicobacter pylori (strain G27) protein is Large ribosomal subunit protein uL4.